The chain runs to 601 residues: UvrABC system protein C (601 aa).

The region spanning 17–95 is the GIY-YIG domain; the sequence is TLPGVYRMLD…IKALAPRYNI (79 aa). The region spanning 204 to 239 is the UVR domain; the sequence is SELINELTRRMTAAAEAMAFEQAAELRDQIQALARV.

This sequence belongs to the UvrC family. In terms of assembly, interacts with UvrB in an incision complex.

It is found in the cytoplasm. Its function is as follows. The UvrABC repair system catalyzes the recognition and processing of DNA lesions. UvrC both incises the 5' and 3' sides of the lesion. The N-terminal half is responsible for the 3' incision and the C-terminal half is responsible for the 5' incision. The chain is UvrABC system protein C from Chromobacterium violaceum (strain ATCC 12472 / DSM 30191 / JCM 1249 / CCUG 213 / NBRC 12614 / NCIMB 9131 / NCTC 9757 / MK).